A 601-amino-acid polypeptide reads, in one-letter code: MEFKVIAEYFDKLEKISSRLQLTALLADLLSKSDKAIIDKVVYIIQGKLWPDFLGYPELGIGEKFLIKAISIATNTDENSVENLYKSTGDLGEVARRLKSKQQSTGILGFLGTSSKESLTVDEVYSTLSKVALTTGEGSRDLKIRLLAGLLKKADPLEAKFLVRFVEGRLRVGIGDATVLDAMAIAFGGGQSASEIVERAYNLRADLGNIAKIIVEKGIEALKTLKPEVGIPIRPMLAERLSNPEEILKKVGGSALVDYKYDGERAQIHKKSDKIFIFSRRLENITSQYPDVVEYISKYVEGKEFIIEGEIVAVDPESGEMRAFQELMHRKRKSDIYEAIKEYPVNVFLFDLMYYEDVDYTTKPLEVRRKLLESIVKPNDYVKIAHHIQVNNVEDLKSFFYRAISEGGEGVMVKAIGKDAIYQAGARGWLWIKLKRDYQSEMADTVDLVVVGGFYGKGKRGGKISSLLMAAYNPKTDTFESVCKVASGFSDEQLDELQKKLMEIKRDIKHPRVNSKMEPDIWIEPVYVAEIIGAEITISPLHTCCQDVVEKDAGLSIRFPRFIRWRDDKSPEDATTTDEILEMYNKQPKKKIESPLVDESV.

Aspartate 258 lines the ATP pocket. Lysine 260 (N6-AMP-lysine intermediate) is an active-site residue. ATP contacts are provided by arginine 265, arginine 280, glutamate 310, phenylalanine 350, arginine 427, and lysine 433.

This sequence belongs to the ATP-dependent DNA ligase family. Mg(2+) is required as a cofactor. Ca(2+) serves as cofactor. It depends on Mn(2+) as a cofactor.

It carries out the reaction ATP + (deoxyribonucleotide)n-3'-hydroxyl + 5'-phospho-(deoxyribonucleotide)m = (deoxyribonucleotide)n+m + AMP + diphosphate.. Functionally, DNA ligase that seals nicks in double-stranded DNA during DNA replication, DNA recombination and DNA repair. Also has low activity with dATP. Inactive with NAD(+), CTP, GTP, UTP, dCTP, dGTP or dTTP. This chain is DNA ligase, found in Saccharolobus shibatae (strain ATCC 51178 / DSM 5389 / JCM 8931 / NBRC 15437 / B12) (Sulfolobus shibatae).